Reading from the N-terminus, the 502-residue chain is Type-2 serine--tRNA ligase (502 aa).

Alanine 304 contributes to the L-serine binding site. Cysteine 306 is a binding site for Zn(2+). Arginine 336 provides a ligand contact to L-serine. Residues 336-338 (RYE) and 347-348 (RV) each bind ATP. Residues 353–355 (RVE) and glutamine 400 contribute to the L-serine site. Position 355 (glutamate 355) interacts with Zn(2+). Glutamate 432 serves as a coordination point for ATP. Position 435 (asparagine 435) interacts with L-serine. Cysteine 461 is a Zn(2+) binding site. Residue arginine 468 participates in ATP binding.

The protein belongs to the class-II aminoacyl-tRNA synthetase family. Type-2 seryl-tRNA synthetase subfamily. Homodimer. Zn(2+) serves as cofactor.

The protein localises to the cytoplasm. The enzyme catalyses tRNA(Ser) + L-serine + ATP = L-seryl-tRNA(Ser) + AMP + diphosphate + H(+). It carries out the reaction tRNA(Sec) + L-serine + ATP = L-seryl-tRNA(Sec) + AMP + diphosphate + H(+). It functions in the pathway aminoacyl-tRNA biosynthesis; selenocysteinyl-tRNA(Sec) biosynthesis; L-seryl-tRNA(Sec) from L-serine and tRNA(Sec): step 1/1. Functionally, catalyzes the attachment of serine to tRNA(Ser). Is also able to aminoacylate tRNA(Sec) with serine, to form the misacylated tRNA L-seryl-tRNA(Sec), which will be further converted into selenocysteinyl-tRNA(Sec). This Methanococcoides burtonii (strain DSM 6242 / NBRC 107633 / OCM 468 / ACE-M) protein is Type-2 serine--tRNA ligase.